The sequence spans 232 residues: Flavin-dependent thymidylate synthase (232 aa).

Residues 1–204 form the ThyX domain; it reads MKIALLQHTP…PTIFRDAGPG (204 aa). FAD contacts are provided by residues Ser55, 79-81, and Gln87; that span reads RHR. DUMP is bound by residues 76 to 79, 87 to 91, and Arg143; these read QLVR and QQSQR. Positions 79 to 89 match the ThyX motif motif; that stretch reads RHRIASYSQQS. Residues 159–161 and His165 contribute to the FAD site; that span reads NAR. Residue Arg170 participates in dUMP binding. Arg170 (involved in ionization of N3 of dUMP, leading to its activation) is an active-site residue.

The protein belongs to the thymidylate synthase ThyX family. In terms of assembly, homotetramer. The cofactor is FAD.

The catalysed reaction is dUMP + (6R)-5,10-methylene-5,6,7,8-tetrahydrofolate + NADPH + H(+) = dTMP + (6S)-5,6,7,8-tetrahydrofolate + NADP(+). It functions in the pathway pyrimidine metabolism; dTTP biosynthesis. In terms of biological role, catalyzes the reductive methylation of 2'-deoxyuridine-5'-monophosphate (dUMP) to 2'-deoxythymidine-5'-monophosphate (dTMP) while utilizing 5,10-methylenetetrahydrofolate (mTHF) as the methyl donor, and NADPH and FADH(2) as the reductant. This chain is Flavin-dependent thymidylate synthase, found in Geobacter sulfurreducens (strain ATCC 51573 / DSM 12127 / PCA).